We begin with the raw amino-acid sequence, 100 residues long: Urease subunit gamma (100 aa).

It belongs to the urease gamma subunit family. In terms of assembly, heterotrimer of UreA (gamma), UreB (beta) and UreC (alpha) subunits. Three heterotrimers associate to form the active enzyme.

Its subcellular location is the cytoplasm. The catalysed reaction is urea + 2 H2O + H(+) = hydrogencarbonate + 2 NH4(+). The protein operates within nitrogen metabolism; urea degradation; CO(2) and NH(3) from urea (urease route): step 1/1. In Variovorax paradoxus (strain S110), this protein is Urease subunit gamma.